A 214-amino-acid chain; its full sequence is Putative F-box protein At5g15670 (214 aa).

Residues 22–68 enclose the F-box domain; that stretch reads RNKFDEIPHDLVIEILGRLPAKSVARFLTVSKLWATSIRSLDFIKSY.

The protein is Putative F-box protein At5g15670 of Arabidopsis thaliana (Mouse-ear cress).